The primary structure comprises 576 residues: Adenine deaminase (576 aa).

It belongs to the metallo-dependent hydrolases superfamily. Adenine deaminase family. Mn(2+) serves as cofactor.

The catalysed reaction is adenine + H2O + H(+) = hypoxanthine + NH4(+). This chain is Adenine deaminase, found in Syntrophobacter fumaroxidans (strain DSM 10017 / MPOB).